Reading from the N-terminus, the 211-residue chain is Transmembrane protein 247 (211 aa).

2 stretches are compositionally biased toward basic and acidic residues: residues 1-10 (MAMEDREVME) and 31-45 (PEGK…EVPK). The segment at 1 to 90 (MAMEDREVME…AGDGPGLESV (90 aa)) is disordered. Residues 63–73 (PGPPRSLPPKS) are compositionally biased toward pro residues. Residues 119-148 (KYLHQENERQRQHEEVMEQLQQQQQQQQAL) adopt a coiled-coil conformation. 2 consecutive transmembrane segments (helical) span residues 159–179 (LLLP…IHII) and 186–206 (VFFL…LCLI).

The protein resides in the membrane. This is Transmembrane protein 247 (Tmem247) from Mus musculus (Mouse).